The sequence spans 566 residues: Mucolipin-2 (566 aa).

Over 1-65 the chain is Cytoplasmic; that stretch reads MARQPYRFPQ…YRARRQIPWK (65 aa). A helical transmembrane segment spans residues 66–86; it reads LGLQILKIVMVTTQLVRFGLS. Residues 87-288 lie on the Extracellular side of the membrane; sequence NQLVVAFKED…IFGSTQKNAQ (202 aa). The segment at 107–123 is extracellular/lumenal pore loop; sequence KGYSGTDEDDYSCSVYT. Cystine bridges form between cysteine 164-cysteine 190 and cysteine 243-cysteine 274. The helical transmembrane segment at 289–309 threads the bilayer; it reads YVLVFDAFVIVICLASLILCT. The Cytoplasmic portion of the chain corresponds to 310–346; it reads RSIVLALRLRKRFLNFFLEKYKRPVCDTDQWEFINGW. A helical membrane pass occupies residues 347–367; it reads YVLVIISDLMTIIGSILKMEI. Residues 368 to 376 lie on the Extracellular side of the membrane; it reads KAKNLTNYD. The chain crosses the membrane as a helical span at residues 377-397; the sequence is LCSIFLGTSTLLVWVGVIRYL. Residues 398 to 419 are Cytoplasmic-facing; sequence GYFQAYNVLILTMQASLPKVLR. A helical membrane pass occupies residues 420 to 440; sequence FCACAGMIYLGYTFCGWIVLG. Over 441 to 448 the chain is Extracellular; sequence PYHDKFEN. The segment at residues 449 to 469 is an intramembrane region (pore-forming); that stretch reads LNTVAECLFSLVNGDDMFATF. A Selectivity filter motif is present at residues 461-464; the sequence is NGDD. Over 470–480 the chain is Extracellular; sequence AQIQQKSILVW. The helical transmembrane segment at 481–502 threads the bilayer; that stretch reads LFSRLYLYSFISLFIYMILSLF. Over 503 to 566 the chain is Cytoplasmic; sequence IALITDSYDT…RSDDHLIPIS (64 aa).

This sequence belongs to the transient receptor (TC 1.A.4) family. Polycystin subfamily. MCOLN2 sub-subfamily. In terms of assembly, forms homooligomeric complexes; probably tetrameric. Can heterooligomerize with MCOLN1; heteromeric assemblies have different channel properties as compared to the respective homooligomers and may be tissue-specific. Interacts with TMEM176A.

The protein resides in the cell membrane. It is found in the late endosome membrane. It localises to the lysosome membrane. The protein localises to the recycling endosome membrane. It carries out the reaction Ca(2+)(in) = Ca(2+)(out). The catalysed reaction is Fe(2+)(in) = Fe(2+)(out). Channel activity is reduced by low extracellular/lumenal pH level. Functionally, nonselective cation channel probably playing a role in the regulation of membrane trafficking events. Acts as a Ca(2+)-permeable cation channel with inwardly rectifying activity. May activate ARF6 and be involved in the trafficking of GPI-anchored cargo proteins to the cell surface via the ARF6-regulated recycling pathway. May play a role in immune processes. In adaptive immunity, TRPML2 and TRPML1 may play redundant roles in the function of the specialized lysosomes of B cells. In the innate immune response, may play a role in the regulation of chemokine secretion and macrophage migration. Through a possible and probably tissue-specific heteromerization with MCOLN1 may be at least in part involved in many lysosome-dependent cellular events. Also functions as a Fe(2+) permeable channel. In Homo sapiens (Human), this protein is Mucolipin-2.